Reading from the N-terminus, the 567-residue chain is Malate synthase, glyoxysomal (567 aa).

The active-site Proton acceptor is arginine 182. Residue aspartate 468 is the Proton donor of the active site. The Microbody targeting signal signature appears at 565–567; it reads SRL.

The protein belongs to the malate synthase family.

It localises to the glyoxysome. The catalysed reaction is glyoxylate + acetyl-CoA + H2O = (S)-malate + CoA + H(+). It participates in carbohydrate metabolism; glyoxylate cycle; (S)-malate from isocitrate: step 2/2. In Ricinus communis (Castor bean), this protein is Malate synthase, glyoxysomal.